The primary structure comprises 189 residues: dCTP deaminase (189 aa).

Residues Lys-112–Arg-117, Thr-136–Glu-138, Gln-157, Tyr-171, and Gln-181 contribute to the dCTP site. Residue Glu-138 is the Proton donor/acceptor of the active site.

This sequence belongs to the dCTP deaminase family. As to quaternary structure, homotrimer.

It carries out the reaction dCTP + H2O + H(+) = dUTP + NH4(+). It functions in the pathway pyrimidine metabolism; dUMP biosynthesis; dUMP from dCTP (dUTP route): step 1/2. Functionally, catalyzes the deamination of dCTP to dUTP. This Xanthomonas campestris pv. campestris (strain 8004) protein is dCTP deaminase.